Reading from the N-terminus, the 447-residue chain is Argininosuccinate synthase (447 aa).

ATP contacts are provided by residues 17 to 25 and A43; that span reads AFSGGLDTS. Y99 contacts L-citrulline. ATP is bound by residues G129 and T131. 3 residues coordinate L-aspartate: T131, N135, and D136. N135 is a binding site for L-citrulline. Residue D136 coordinates ATP. Residues R139 and S192 each contribute to the L-citrulline site. Residue D194 participates in ATP binding. 3 residues coordinate L-citrulline: T201, E203, and E280.

It belongs to the argininosuccinate synthase family. Type 2 subfamily. As to quaternary structure, homotetramer.

It localises to the cytoplasm. The enzyme catalyses L-citrulline + L-aspartate + ATP = 2-(N(omega)-L-arginino)succinate + AMP + diphosphate + H(+). It participates in amino-acid biosynthesis; L-arginine biosynthesis; L-arginine from L-ornithine and carbamoyl phosphate: step 2/3. This is Argininosuccinate synthase from Klebsiella pneumoniae subsp. pneumoniae (strain ATCC 700721 / MGH 78578).